Reading from the N-terminus, the 144-residue chain is Small ribosomal subunit protein uS12 (144 aa).

Asp-103 carries the 3-methylthioaspartic acid modification. Positions 121–144 (VANRKQGRSKYGTKKASAVPAKKK) are disordered.

It belongs to the universal ribosomal protein uS12 family. As to quaternary structure, part of the 30S ribosomal subunit. Contacts proteins S8 and S17. May interact with IF1 in the 30S initiation complex.

In terms of biological role, with S4 and S5 plays an important role in translational accuracy. Its function is as follows. Interacts with and stabilizes bases of the 16S rRNA that are involved in tRNA selection in the A site and with the mRNA backbone. Located at the interface of the 30S and 50S subunits, it traverses the body of the 30S subunit contacting proteins on the other side and probably holding the rRNA structure together. The combined cluster of proteins S8, S12 and S17 appears to hold together the shoulder and platform of the 30S subunit. In Roseiflexus castenholzii (strain DSM 13941 / HLO8), this protein is Small ribosomal subunit protein uS12.